Here is a 65-residue protein sequence, read N- to C-terminus: UPF0434 protein HS_0657 (65 aa).

It belongs to the UPF0434 family.

This Histophilus somni (strain 129Pt) (Haemophilus somnus) protein is UPF0434 protein HS_0657.